The following is a 1246-amino-acid chain: Stromal processing peptidase, chloroplastic (1246 aa).

Residues 1-136 constitute a chloroplast transit peptide; it reads MASFPSPPLA…AKIRRRHVLH (136 aa). H228 is a binding site for Zn(2+). E231 (proton acceptor) is an active-site residue. H232 serves as a coordination point for Zn(2+). E302 is an active-site residue. E309 is a binding site for Zn(2+).

This sequence belongs to the peptidase M16 family. It depends on Zn(2+) as a cofactor.

The protein localises to the plastid. It localises to the chloroplast stroma. Cleaves presequences (transit peptides) from chloroplastic protein precursors. Initially recognizes a precursor by binding to the C-terminus of its transit peptide and then removes the transit peptide in a single endoproteolytic step. In a next step, pursues the cleavage of transit peptide to a subfragment form. This Oryza sativa subsp. japonica (Rice) protein is Stromal processing peptidase, chloroplastic.